A 98-amino-acid polypeptide reads, in one-letter code: Large ribosomal subunit protein uL23 (98 aa).

This sequence belongs to the universal ribosomal protein uL23 family. As to quaternary structure, part of the 50S ribosomal subunit. Contacts protein L29, and trigger factor when it is bound to the ribosome.

Functionally, one of the early assembly proteins it binds 23S rRNA. One of the proteins that surrounds the polypeptide exit tunnel on the outside of the ribosome. Forms the main docking site for trigger factor binding to the ribosome. The protein is Large ribosomal subunit protein uL23 of Halorhodospira halophila (strain DSM 244 / SL1) (Ectothiorhodospira halophila (strain DSM 244 / SL1)).